A 368-amino-acid polypeptide reads, in one-letter code: Germination protease (368 aa).

Positions 1 to 16 (MKKSELDVNQYLIRTD) are excised as a propeptide.

It belongs to the peptidase A25 family. Homotetramer. In terms of processing, autoproteolytically processed. The inactive tetrameric zymogen termed p46 autoprocesses to a smaller form termed p41, which is active only during spore germination.

The enzyme catalyses Endopeptidase action with P4 Glu or Asp, P1 preferably Glu &gt; Asp, P1' hydrophobic and P2' Ala.. Its function is as follows. Initiates the degradation of small, acid-soluble proteins during spore germination. This chain is Germination protease (gpr), found in Bacillus subtilis (strain 168).